The primary structure comprises 883 residues: DNA mismatch repair protein MutS (883 aa).

602 to 609 (GPNMSGKS) contributes to the ATP binding site.

This sequence belongs to the DNA mismatch repair MutS family.

Its function is as follows. This protein is involved in the repair of mismatches in DNA. It is possible that it carries out the mismatch recognition step. This protein has a weak ATPase activity. The chain is DNA mismatch repair protein MutS from Staphylococcus haemolyticus (strain JCSC1435).